Here is a 536-residue protein sequence, read N- to C-terminus: Probable pectinesterase/pectinesterase inhibitor 59 (536 aa).

The first 30 residues, 1–30 (MNMMMQKLSILFLHLILLVLLCVHPLTTVA), serve as a signal peptide directing secretion. Residues 31 to 183 (DRNSTDWCDK…SHLISNCLAV (153 aa)) are pectinesterase inhibitor 59. N33, N91, N116, N159, and N195 each carry an N-linked (GlcNAc...) asparagine glycan. The pectinesterase 59 stretch occupies residues 221–522 (NLVVAKDGSG…FTVGKFIAGT (302 aa)). 2 residues coordinate substrate: T298 and Q328. D351 (proton donor; for pectinesterase activity) is an active-site residue. A disulfide bridge connects residues C365 and C385. D372 (nucleophile; for pectinesterase activity) is an active-site residue. The substrate site is built by R440 and W442.

In the N-terminal section; belongs to the PMEI family. This sequence in the C-terminal section; belongs to the pectinesterase family. In terms of tissue distribution, expressed in siliques.

The protein resides in the secreted. It localises to the cell wall. The enzyme catalyses [(1-&gt;4)-alpha-D-galacturonosyl methyl ester](n) + n H2O = [(1-&gt;4)-alpha-D-galacturonosyl](n) + n methanol + n H(+). Its pathway is glycan metabolism; pectin degradation; 2-dehydro-3-deoxy-D-gluconate from pectin: step 1/5. In terms of biological role, acts in the modification of cell walls via demethylesterification of cell wall pectin. The chain is Probable pectinesterase/pectinesterase inhibitor 59 (PME59) from Arabidopsis thaliana (Mouse-ear cress).